The following is a 181-amino-acid chain: HGPRTase-like protein 1 (181 aa).

The protein belongs to the purine/pyrimidine phosphoribosyltransferase family. Archaeal HPRT subfamily.

Functionally, may catalyze a purine salvage reaction, the substrate is unknown. The sequence is that of HGPRTase-like protein 1 from Halalkalicoccus jeotgali (strain DSM 18796 / CECT 7217 / JCM 14584 / KCTC 4019 / B3).